Here is a 626-residue protein sequence, read N- to C-terminus: Chaperone protein HtpG (626 aa).

An a; substrate-binding region spans residues 1–341; it reads METKQFKAES…SEDLSLNISR (341 aa). Residues 342-552 are b; the sequence is EILQHDRQLK…EGELSIEMEK (211 aa). The interval 490 to 509 is disordered; it reads DLGIEGEEKENTSSSDDKEN. A compositionally biased stretch (basic and acidic residues) spans 498 to 509; sequence KENTSSSDDKEN. The c stretch occupies residues 553-626; it reads VLNAMPNNQN…FTNNICKIMK (74 aa).

Belongs to the heat shock protein 90 family. As to quaternary structure, homodimer.

It localises to the cytoplasm. In terms of biological role, molecular chaperone. Has ATPase activity. The chain is Chaperone protein HtpG from Clostridium botulinum (strain Okra / Type B1).